Here is a 439-residue protein sequence, read N- to C-terminus: Chitinase-like protein Idgf1 (439 aa).

The N-terminal stretch at 1-20 (MRFQLCYLLGLLSVTSLSHA) is a signal peptide. In terms of domain architecture, GH18 spans 22-439 (SNLICYYDST…IVRSIKYFMG (418 aa)). Cysteine 26 and cysteine 53 are disulfide-bonded. N-linked (GlcNAc...) asparagine glycosylation is found at asparagine 122, asparagine 218, and asparagine 346. A disulfide bond links cysteine 340 and cysteine 423.

This sequence belongs to the glycosyl hydrolase 18 family. IDGF subfamily. Post-translationally, glycosylated.

The protein localises to the secreted. Its function is as follows. Cooperates with insulin-like peptides to stimulate the proliferation, polarization and motility of imaginal disk cells. May act by stabilizing the binding of insulin-like peptides to its receptor through a simultaneous interaction with both molecules to form a multiprotein signaling complex. This Drosophila yakuba (Fruit fly) protein is Chitinase-like protein Idgf1 (Idgf1).